The chain runs to 879 residues: Alanine--tRNA ligase (879 aa).

4 residues coordinate Zn(2+): histidine 566, histidine 570, cysteine 668, and histidine 672.

Belongs to the class-II aminoacyl-tRNA synthetase family. The cofactor is Zn(2+).

The protein resides in the cytoplasm. The catalysed reaction is tRNA(Ala) + L-alanine + ATP = L-alanyl-tRNA(Ala) + AMP + diphosphate. In terms of biological role, catalyzes the attachment of alanine to tRNA(Ala) in a two-step reaction: alanine is first activated by ATP to form Ala-AMP and then transferred to the acceptor end of tRNA(Ala). Also edits incorrectly charged Ser-tRNA(Ala) and Gly-tRNA(Ala) via its editing domain. The chain is Alanine--tRNA ligase from Listeria welshimeri serovar 6b (strain ATCC 35897 / DSM 20650 / CCUG 15529 / CIP 8149 / NCTC 11857 / SLCC 5334 / V8).